The sequence spans 590 residues: Enhancer of polycomb-like protein 1 (590 aa).

Disordered regions lie at residues 302 to 335 and 471 to 497; these read DEDL…PVRS and TPPR…EPPV. Basic and acidic residues predominate over residues 475-488; sequence ELGEDRSDRWKYDS.

Belongs to the enhancer of polycomb family. Component of the NuA4 histone acetyltransferase complex.

Its subcellular location is the nucleus. In terms of biological role, component of the NuA4 histone acetyltransferase complex which is involved in transcriptional activation of selected genes principally by acetylation of nucleosomal histone H4 and H2A. The NuA4 complex is also involved in DNA repair. Involved in gene silencing by neighboring heterochromatin, blockage of the silencing spreading along the chromosome, and required for cell cycle progression through G2/M. The protein is Enhancer of polycomb-like protein 1 (EPL1) of Gibberella zeae (strain ATCC MYA-4620 / CBS 123657 / FGSC 9075 / NRRL 31084 / PH-1) (Wheat head blight fungus).